The chain runs to 150 residues: Putative biopolymer transport protein ExbB-like 2 (150 aa).

The next 3 membrane-spanning stretches (helical) occupy residues 5–25, 63–83, and 97–117; these read VDYG…AIAI, APYI…MDLG, and LALA…AIVI.

Belongs to the ExbB/TolQ family.

The protein localises to the cell inner membrane. The sequence is that of Putative biopolymer transport protein ExbB-like 2 from Helicobacter pylori (strain J99 / ATCC 700824) (Campylobacter pylori J99).